Here is a 231-residue protein sequence, read N- to C-terminus: LexA repressor (231 aa).

The H-T-H motif DNA-binding region spans 26–46 (FDEMKLALDLRSKSGIHRLIT). The interval 79-98 (VGFQPRVIDGDRPDRPRPAN) is disordered. Basic and acidic residues predominate over residues 86–95 (IDGDRPDRPR). Active-site for autocatalytic cleavage activity residues include S152 and K190.

It belongs to the peptidase S24 family. As to quaternary structure, homodimer.

The enzyme catalyses Hydrolysis of Ala-|-Gly bond in repressor LexA.. Its function is as follows. Represses a number of genes involved in the response to DNA damage (SOS response), including recA and lexA. In the presence of single-stranded DNA, RecA interacts with LexA causing an autocatalytic cleavage which disrupts the DNA-binding part of LexA, leading to derepression of the SOS regulon and eventually DNA repair. The protein is LexA repressor of Ruegeria pomeroyi (strain ATCC 700808 / DSM 15171 / DSS-3) (Silicibacter pomeroyi).